The primary structure comprises 202 residues: Remorin 1.4 (202 aa).

A compositionally biased stretch (basic and acidic residues) spans 1-10; sequence MAEEEPKKVT. The segment at 1–79 is disordered; that stretch reads MAEEEPKKVT…VEEEKKEGSV (79 aa). The segment covering 25–39 has biased composition (low complexity); sequence EKPAAAADVAPQEKP. The span at 40 to 50 shows a compositional bias: pro residues; it reads VAPPPVLPSPA. The span at 68-79 shows a compositional bias: basic and acidic residues; sequence KEVEEEKKEGSV. Residues 123–169 adopt a coiled-coil conformation; that stretch reads ENNKKAAVEAELKKMEEQLEKKKAEYVEQMKNKIAQIHKEAEEKRAM.

Belongs to the remorin family.

The chain is Remorin 1.4 from Arabidopsis thaliana (Mouse-ear cress).